The following is a 183-amino-acid chain: Gamma-crystallin N (183 aa).

Beta/gamma crystallin 'Greek key' domains lie at 6-46, 47-89, 95-136, and 138-180; these read GKIT…RVES, GAWV…RPVG, FRID…KVYG, and GAWV…RRVL.

The protein belongs to the beta/gamma-crystallin family. As to quaternary structure, monomer. In terms of tissue distribution, detected in the auditory hindbrain where it is highly expressed in the medial nucleus of the trapezoid body, but also present in other nuclei of the superior olivary complex.

Its function is as follows. Crystallins are the dominant structural components of the vertebrate eye lens. Also plays an important role for integrity and function of auditory nuclei. The sequence is that of Gamma-crystallin N from Rattus norvegicus (Rat).